The sequence spans 204 residues: Inactive ribonuclease-like protein 9 (204 aa).

A signal peptide spans 1–26 (MMRTLITIHPLPLLLLLQQLLQPVQF). 3 disulfides stabilise this stretch: cysteine 97/cysteine 152, cysteine 115/cysteine 167, and cysteine 122/cysteine 129. N-linked (GlcNAc...) asparagine glycosylation is found at asparagine 130 and asparagine 142.

The protein belongs to the pancreatic ribonuclease family.

It localises to the secreted. Does not exhibit any ribonuclease activity. This is Inactive ribonuclease-like protein 9 (RNASE9) from Symphalangus syndactylus (Siamang).